The chain runs to 1562 residues: Cell wall protein RBR3 (1562 aa).

The signal sequence occupies residues methionine 1 to alanine 20. A glycan (N-linked (GlcNAc...) asparagine) is linked at asparagine 190. Residues alanine 338–threonine 353 show a composition bias toward low complexity. The tract at residues alanine 338–valine 366 is disordered. Asparagine 373 carries N-linked (GlcNAc...) asparagine glycosylation. Composition is skewed to low complexity over residues phenylalanine 383–serine 415 and serine 422–threonine 729. 3 disordered regions span residues phenylalanine 383–threonine 729, glycine 1404–asparagine 1424, and tyrosine 1455–asparagine 1486. Asparagine 602, asparagine 679, and asparagine 705 each carry an N-linked (GlcNAc...) asparagine glycan. A compositionally biased stretch (gly residues) spans serine 1407–serine 1419. The span at glycine 1468 to asparagine 1486 shows a compositional bias: polar residues. Residue asparagine 1538 is the site of GPI-anchor amidated asparagine attachment. A propeptide spans serine 1539–isoleucine 1562 (removed in mature form).

This sequence belongs to the HYR1/IFF family. Post-translationally, the GPI-anchor is attached to the protein in the endoplasmic reticulum and serves to target the protein to the cell surface. There, the glucosamine-inositol phospholipid moiety is cleaved off and the GPI-modified mannoprotein is covalently attached via its lipidless GPI glycan remnant to the 1,6-beta-glucan of the outer cell wall layer.

The protein localises to the secreted. The protein resides in the cell wall. It is found in the membrane. GPI-anchored cell wall protein involved in cell wall organization, hyphal growth, as well as in host-fungal interaction and virulence. In Candida albicans (strain SC5314 / ATCC MYA-2876) (Yeast), this protein is Cell wall protein RBR3 (RBR3).